Reading from the N-terminus, the 450-residue chain is Glutamyl-tRNA(Gln) amidotransferase subunit A, mitochondrial (450 aa).

Residues lysine 47 and serine 122 each act as charge relay system in the active site. Residue serine 146 is the Acyl-ester intermediate of the active site.

It belongs to the amidase family. GatA subfamily. Subunit of the heterotrimeric GatFAB amidotransferase (AdT) complex, composed of A, B and F subunits.

It is found in the mitochondrion. The enzyme catalyses L-glutamyl-tRNA(Gln) + L-glutamine + ATP + H2O = L-glutaminyl-tRNA(Gln) + L-glutamate + ADP + phosphate + H(+). Allows the formation of correctly charged Gln-tRNA(Gln) through the transamidation of misacylated Glu-tRNA(Gln) in the mitochondria. The reaction takes place in the presence of glutamine and ATP through an activated gamma-phospho-Glu-tRNA(Gln). The sequence is that of Glutamyl-tRNA(Gln) amidotransferase subunit A, mitochondrial from Candida albicans (strain WO-1) (Yeast).